We begin with the raw amino-acid sequence, 339 residues long: Aspartate carbamoyltransferase catalytic subunit (339 aa).

Arg60 and Thr61 together coordinate carbamoyl phosphate. Lys88 serves as a coordination point for L-aspartate. Carbamoyl phosphate contacts are provided by Arg110, His143, and Gln146. Residues Arg183 and Arg254 each coordinate L-aspartate. Carbamoyl phosphate-binding residues include Gly295 and Pro296.

This sequence belongs to the aspartate/ornithine carbamoyltransferase superfamily. ATCase family. In terms of assembly, heterododecamer (2C3:3R2) of six catalytic PyrB chains organized as two trimers (C3), and six regulatory PyrI chains organized as three dimers (R2).

The enzyme catalyses carbamoyl phosphate + L-aspartate = N-carbamoyl-L-aspartate + phosphate + H(+). It participates in pyrimidine metabolism; UMP biosynthesis via de novo pathway; (S)-dihydroorotate from bicarbonate: step 2/3. Its function is as follows. Catalyzes the condensation of carbamoyl phosphate and aspartate to form carbamoyl aspartate and inorganic phosphate, the committed step in the de novo pyrimidine nucleotide biosynthesis pathway. The chain is Aspartate carbamoyltransferase catalytic subunit from Prochlorococcus marinus (strain MIT 9312).